A 67-amino-acid polypeptide reads, in one-letter code: Large ribosomal subunit protein uL29 (67 aa).

It belongs to the universal ribosomal protein uL29 family.

The protein is Large ribosomal subunit protein uL29 of Wolbachia sp. subsp. Drosophila simulans (strain wRi).